A 444-amino-acid chain; its full sequence is MHISTTTAPQGGKLPFYRHLYFQVIVAIIGGILLGHFYPQTGEALKPLGDAFIKLVKMVIAPVIFLTVATGIAGMSDLKKVGRVAGKAMIYFLCFSTLALVVGMLVSNILQPGAGMHINPATLDGKAVASYAQQAHDSTITGFLMNIIPDTIVGAFAKGDILQVLFFSVLFGLALAMVGDLGKPVTNFLQALTAPVFKLVAILMKAAPIGAFGAMAFTIGKYGIGSIANLAFLIGTFYLTSLLFVLVVLGGVARYNGFSILALIRYIKEELLLVLGTSSSEAALPGLMAKMERAGCKRSVVGLVIPTGYSFNLDGTNIYMTLAALFIAQATDIQLSLGDQILLLLVAMLSSKGAAGITGAGFITLAATLSVVPSVPVAGMALILGIDRFMSECRALTNFIGNAVATVVVARWENELDQTQFRAAMAGELPEEIDVVAEPVPTAA.

8 helical membrane passes run 19-39, 55-75, 90-110, 161-181, 199-219, 230-250, 343-363, and 366-386; these read HLYFQVIVAIIGGILLGHFYP, LVKMVIAPVIFLTVATGIAGM, IYFLCFSTLALVVGMLVSNIL, ILQVLFFSVLFGLALAMVGDL, LVAILMKAAPIGAFGAMAFTI, LAFLIGTFYLTSLLFVLVVLG, LLLVAMLSSKGAAGITGAGFI, and AATLSVVPSVPVAGMALILGI.

The protein belongs to the dicarboxylate/amino acid:cation symporter (DAACS) (TC 2.A.23) family.

It localises to the cell inner membrane. In terms of biological role, responsible for the transport of dicarboxylates such as succinate, fumarate, and malate from the periplasm across the membrane. In Allorhizobium ampelinum (strain ATCC BAA-846 / DSM 112012 / S4) (Agrobacterium vitis (strain S4)), this protein is C4-dicarboxylate transport protein.